A 289-amino-acid chain; its full sequence is Glycine--tRNA ligase alpha subunit (289 aa).

This sequence belongs to the class-II aminoacyl-tRNA synthetase family. In terms of assembly, tetramer of two alpha and two beta subunits.

The protein localises to the cytoplasm. The catalysed reaction is tRNA(Gly) + glycine + ATP = glycyl-tRNA(Gly) + AMP + diphosphate. The protein is Glycine--tRNA ligase alpha subunit of Prochlorococcus marinus subsp. pastoris (strain CCMP1986 / NIES-2087 / MED4).